The primary structure comprises 252 residues: tRNA (guanine-N(7)-)-methyltransferase (252 aa).

S-adenosyl-L-methionine-binding residues include Glu51, Asp76, Asn103, and Asp125. The active site involves Asp125. Residues Lys129, Asp159, and 199 to 202 contribute to the substrate site; that span reads TYYE.

It belongs to the class I-like SAM-binding methyltransferase superfamily. TrmB family.

It carries out the reaction guanosine(46) in tRNA + S-adenosyl-L-methionine = N(7)-methylguanosine(46) in tRNA + S-adenosyl-L-homocysteine. The protein operates within tRNA modification; N(7)-methylguanine-tRNA biosynthesis. Its function is as follows. Catalyzes the formation of N(7)-methylguanine at position 46 (m7G46) in tRNA. This Bacteroides thetaiotaomicron (strain ATCC 29148 / DSM 2079 / JCM 5827 / CCUG 10774 / NCTC 10582 / VPI-5482 / E50) protein is tRNA (guanine-N(7)-)-methyltransferase.